A 59-amino-acid chain; its full sequence is Large ribosomal subunit protein uL30 (59 aa).

The protein belongs to the universal ribosomal protein uL30 family. As to quaternary structure, part of the 50S ribosomal subunit.

This is Large ribosomal subunit protein uL30 from Citrobacter koseri (strain ATCC BAA-895 / CDC 4225-83 / SGSC4696).